The primary structure comprises 335 residues: Vitamin B12 import system permease protein BtuC (335 aa).

Helical transmembrane passes span 25 to 45 (LVVI…IWLW), 67 to 87 (LAVL…QALF), 95 to 114 (GLLG…VLLG), 118 to 140 (LPIW…LLLG), 153 to 173 (LLVG…AVYF), 200 to 220 (LVLA…VLNF), 243 to 263 (VLAI…ISFI), 286 to 306 (CALA…IALF), and 308 to 328 (AELP…IWLL).

Belongs to the binding-protein-dependent transport system permease family. FecCD subfamily. The complex is composed of two ATP-binding proteins (BtuD), two transmembrane proteins (BtuC) and a solute-binding protein (BtuF).

It is found in the cell inner membrane. Its function is as follows. Part of the ABC transporter complex BtuCDF involved in vitamin B12 import. Involved in the translocation of the substrate across the membrane. The polypeptide is Vitamin B12 import system permease protein BtuC (Yersinia enterocolitica serotype O:8 / biotype 1B (strain NCTC 13174 / 8081)).